The primary structure comprises 198 residues: Proteasome subunit beta type-4 (198 aa).

Met1 is subject to N-acetylmethionine. Ser76 carries the phosphoserine modification.

The protein belongs to the peptidase T1B family. The 26S proteasome consists of a 20S proteasome core and two 19S regulatory subunits. The 20S proteasome core is composed of 28 subunits that are arranged in four stacked rings, resulting in a barrel-shaped structure. The two end rings are each formed by seven alpha subunits, and the two central rings are each formed by seven beta subunits. The catalytic chamber with the active sites is on the inside of the barrel.

It localises to the cytoplasm. The protein localises to the nucleus. Functionally, non-catalytic component of the proteasome which degrades poly-ubiquitinated proteins in the cytoplasm and in the nucleus. It is essential for the regulated turnover of proteins and for the removal of misfolded proteins. The proteasome is a multicatalytic proteinase complex that is characterized by its ability to cleave peptides with Arg, Phe, Tyr, Leu, and Glu adjacent to the leaving group at neutral or slightly basic pH. It has an ATP-dependent proteolytic activity. This subunit has a chymotrypsin-like activity. The sequence is that of Proteasome subunit beta type-4 (PRE1) from Saccharomyces cerevisiae (strain ATCC 204508 / S288c) (Baker's yeast).